The primary structure comprises 165 residues: Acireductone dioxygenase (165 aa).

The Fe(2+) site is built by H90, H92, E96, and H134. Residues H90, H92, E96, and H134 each contribute to the Ni(2+) site.

It belongs to the acireductone dioxygenase (ARD) family. Monomer. The cofactor is Fe(2+). Ni(2+) serves as cofactor.

The catalysed reaction is 1,2-dihydroxy-5-(methylsulfanyl)pent-1-en-3-one + O2 = 3-(methylsulfanyl)propanoate + CO + formate + 2 H(+). It carries out the reaction 1,2-dihydroxy-5-(methylsulfanyl)pent-1-en-3-one + O2 = 4-methylsulfanyl-2-oxobutanoate + formate + 2 H(+). It functions in the pathway amino-acid biosynthesis; L-methionine biosynthesis via salvage pathway; L-methionine from S-methyl-5-thio-alpha-D-ribose 1-phosphate: step 5/6. Catalyzes 2 different reactions between oxygen and the acireductone 1,2-dihydroxy-3-keto-5-methylthiopentene (DHK-MTPene) depending upon the metal bound in the active site. Fe-containing acireductone dioxygenase (Fe-ARD) produces formate and 2-keto-4-methylthiobutyrate (KMTB), the alpha-ketoacid precursor of methionine in the methionine recycle pathway. Ni-containing acireductone dioxygenase (Ni-ARD) produces methylthiopropionate, carbon monoxide and formate, and does not lie on the methionine recycle pathway. In Rhodopseudomonas palustris (strain TIE-1), this protein is Acireductone dioxygenase.